The sequence spans 189 residues: Threonylcarbamoyl-AMP synthase (189 aa).

Residues threonine 6 to glycine 189 form the YrdC-like domain.

This sequence belongs to the SUA5 family. TsaC subfamily.

The protein resides in the cytoplasm. The catalysed reaction is L-threonine + hydrogencarbonate + ATP = L-threonylcarbamoyladenylate + diphosphate + H2O. Its function is as follows. Required for the formation of a threonylcarbamoyl group on adenosine at position 37 (t(6)A37) in tRNAs that read codons beginning with adenine. Catalyzes the conversion of L-threonine, HCO(3)(-)/CO(2) and ATP to give threonylcarbamoyl-AMP (TC-AMP) as the acyladenylate intermediate, with the release of diphosphate. This is Threonylcarbamoyl-AMP synthase from Serratia proteamaculans (strain 568).